The chain runs to 271 residues: MPELPEVEITCRGIRPLVAGRTLTALEVRNPRLRQPVPADLAQTLVGERLQGVRRRAKYLLLDFPHGSVLVHLGMSGSLRVVSADEPAGVHDHVDLVFGAEALRLRDPRRFGLVLWHAGDGLSHPLLAALGREPLERGFTGAWLHEATRGVRLSIKQTLMDAHRVVGVGNIYASESLFRARIHPLAPAGAIGPQRLARLVASVRETLLAAIDAGGSTLRDFVGGDGRAGYFQQQYFVYGREGLACRVCATPVRRVVIGQRSTFFCPRCQRR.

Pro2 (schiff-base intermediate with DNA) is an active-site residue. Residue Glu3 is the Proton donor of the active site. Lys58 acts as the Proton donor; for beta-elimination activity in catalysis. DNA contacts are provided by His91 and Arg109. Residues 236–270 (FVYGREGLACRVCATPVRRVVIGQRSTFFCPRCQR) form an FPG-type zinc finger. The Proton donor; for delta-elimination activity role is filled by Arg260.

This sequence belongs to the FPG family. Monomer. It depends on Zn(2+) as a cofactor.

The catalysed reaction is Hydrolysis of DNA containing ring-opened 7-methylguanine residues, releasing 2,6-diamino-4-hydroxy-5-(N-methyl)formamidopyrimidine.. The enzyme catalyses 2'-deoxyribonucleotide-(2'-deoxyribose 5'-phosphate)-2'-deoxyribonucleotide-DNA = a 3'-end 2'-deoxyribonucleotide-(2,3-dehydro-2,3-deoxyribose 5'-phosphate)-DNA + a 5'-end 5'-phospho-2'-deoxyribonucleoside-DNA + H(+). Its function is as follows. Involved in base excision repair of DNA damaged by oxidation or by mutagenic agents. Acts as a DNA glycosylase that recognizes and removes damaged bases. Has a preference for oxidized purines, such as 7,8-dihydro-8-oxoguanine (8-oxoG). Has AP (apurinic/apyrimidinic) lyase activity and introduces nicks in the DNA strand. Cleaves the DNA backbone by beta-delta elimination to generate a single-strand break at the site of the removed base with both 3'- and 5'-phosphates. The sequence is that of Formamidopyrimidine-DNA glycosylase from Aromatoleum aromaticum (strain DSM 19018 / LMG 30748 / EbN1) (Azoarcus sp. (strain EbN1)).